The primary structure comprises 227 residues: Ribonuclease 3 (227 aa).

Positions 4–133 constitute an RNase III domain; it reads FEELEKLLDY…LIAAIYLDSD (130 aa). Residue E46 coordinates Mg(2+). D50 is a catalytic residue. Residues N119 and E122 each contribute to the Mg(2+) site. The active site involves E122. The DRBM domain maps to 158-226; that stretch reads DPKTALQEWA…ARELLHKLKL (69 aa).

It belongs to the ribonuclease III family. In terms of assembly, homodimer. Mg(2+) is required as a cofactor.

It localises to the cytoplasm. It catalyses the reaction Endonucleolytic cleavage to 5'-phosphomonoester.. Functionally, digests double-stranded RNA. Involved in the processing of primary rRNA transcript to yield the immediate precursors to the large and small rRNAs (23S and 16S). Processes some mRNAs, and tRNAs when they are encoded in the rRNA operon. Processes pre-crRNA and tracrRNA of type II CRISPR loci if present in the organism. This Rickettsia bellii (strain OSU 85-389) protein is Ribonuclease 3.